The chain runs to 336 residues: N-acetyl-gamma-glutamyl-phosphate reductase (336 aa).

Residue cysteine 143 is part of the active site.

This sequence belongs to the NAGSA dehydrogenase family. Type 1 subfamily.

Its subcellular location is the cytoplasm. It catalyses the reaction N-acetyl-L-glutamate 5-semialdehyde + phosphate + NADP(+) = N-acetyl-L-glutamyl 5-phosphate + NADPH + H(+). It functions in the pathway amino-acid biosynthesis; L-arginine biosynthesis; N(2)-acetyl-L-ornithine from L-glutamate: step 3/4. In terms of biological role, catalyzes the NADPH-dependent reduction of N-acetyl-5-glutamyl phosphate to yield N-acetyl-L-glutamate 5-semialdehyde. This chain is N-acetyl-gamma-glutamyl-phosphate reductase, found in Dictyoglomus thermophilum (strain ATCC 35947 / DSM 3960 / H-6-12).